Here is a 190-residue protein sequence, read N- to C-terminus: Female-specific histamine-binding protein 1 (190 aa).

The first 18 residues, 1–18, serve as a signal peptide directing secretion; sequence MKLLLSLAFVLALSQVKA. Histamine is bound by residues Tyr-54, Asp-57, Trp-60, Glu-100, Tyr-118, Glu-153, and Trp-155. Intrachain disulfides connect Cys-66–Cys-187 and Cys-137–Cys-166.

Belongs to the calycin superfamily. Histamine-binding salivary protein family. As to quaternary structure, monomer. Expressed in salivary glands.

It is found in the secreted. Functionally, salivary tick protein that acts by scavenging histamine at the wound site, outcompeting histamine receptors for histamine, thereby overcoming host inflammatory responses. Binds histamine with a high-affinity (Kd=18 nM). Contains two binding histamine sites (H and L), that appear to bind histamine with differing affinities (high and low). In vivo, when tested on a mouse asthma model, shows a profound inhibitory effect on allergic asthma. Aerosol administration of this protein prevents airway hyperreactivity and abrogates peribronchial inflammation, eosinophil recruitment, mucus hypersecretion, and interleukins (IL-4 and IL-5) secretion. In addition, when tested on a mouse model of acute respiratory distress syndrome (ARDS), it attenuates endotoxin-induced acute lung injury. In Rhipicephalus appendiculatus (Brown ear tick), this protein is Female-specific histamine-binding protein 1.